Consider the following 443-residue polypeptide: Probable D-serine dehydratase (443 aa).

N6-(pyridoxal phosphate)lysine is present on Lys-116.

The protein belongs to the serine/threonine dehydratase family. DsdA subfamily. Requires pyridoxal 5'-phosphate as cofactor.

It catalyses the reaction D-serine = pyruvate + NH4(+). This chain is Probable D-serine dehydratase, found in Bacillus cereus (strain ATCC 14579 / DSM 31 / CCUG 7414 / JCM 2152 / NBRC 15305 / NCIMB 9373 / NCTC 2599 / NRRL B-3711).